A 167-amino-acid polypeptide reads, in one-letter code: Small ribosomal subunit protein uS5 (167 aa).

In terms of domain architecture, S5 DRBM spans Leu-12–Ile-75.

Belongs to the universal ribosomal protein uS5 family. Part of the 30S ribosomal subunit. Contacts proteins S4 and S8.

Functionally, with S4 and S12 plays an important role in translational accuracy. Located at the back of the 30S subunit body where it stabilizes the conformation of the head with respect to the body. This is Small ribosomal subunit protein uS5 from Buchnera aphidicola subsp. Schizaphis graminum (strain Sg).